A 297-amino-acid chain; its full sequence is Bifunctional protein FolD 2 (297 aa).

Residues 164-166 (GRS), Ser-193, and Ile-234 contribute to the NADP(+) site.

The protein belongs to the tetrahydrofolate dehydrogenase/cyclohydrolase family. Homodimer.

It carries out the reaction (6R)-5,10-methylene-5,6,7,8-tetrahydrofolate + NADP(+) = (6R)-5,10-methenyltetrahydrofolate + NADPH. It catalyses the reaction (6R)-5,10-methenyltetrahydrofolate + H2O = (6R)-10-formyltetrahydrofolate + H(+). It functions in the pathway one-carbon metabolism; tetrahydrofolate interconversion. In terms of biological role, catalyzes the oxidation of 5,10-methylenetetrahydrofolate to 5,10-methenyltetrahydrofolate and then the hydrolysis of 5,10-methenyltetrahydrofolate to 10-formyltetrahydrofolate. This is Bifunctional protein FolD 2 from Haloarcula marismortui (strain ATCC 43049 / DSM 3752 / JCM 8966 / VKM B-1809) (Halobacterium marismortui).